We begin with the raw amino-acid sequence, 132 residues long: Antimicrobial protein Ace-AMP1 (132 aa).

Positions Met1–Ser27 are cleaved as a signal peptide. Disulfide bonds link Cys31–Cys76, Cys41–Cys54, Cys55–Cys100, and Cys74–Cys116.

Belongs to the plant LTP family. Highly divergent. In terms of assembly, monomer.

Its function is as follows. Antifungal and antibacterial activity against the Gram-positive bacteria B.megaterium and S.lutea. In Allium cepa (Onion), this protein is Antimicrobial protein Ace-AMP1.